The sequence spans 424 residues: UDP-N-acetylglucosamine 1-carboxyvinyltransferase 3 (424 aa).

Position 22-23 (22-23 (KN)) interacts with phosphoenolpyruvate. Arginine 94 provides a ligand contact to UDP-N-acetyl-alpha-D-glucosamine. The active-site Proton donor is aspartate 118. Residues 123 to 127 (RPVDQ), aspartate 306, and leucine 328 each bind UDP-N-acetyl-alpha-D-glucosamine.

It belongs to the EPSP synthase family. MurA subfamily.

It localises to the cytoplasm. The enzyme catalyses phosphoenolpyruvate + UDP-N-acetyl-alpha-D-glucosamine = UDP-N-acetyl-3-O-(1-carboxyvinyl)-alpha-D-glucosamine + phosphate. Its pathway is cell wall biogenesis; peptidoglycan biosynthesis. Cell wall formation. Adds enolpyruvyl to UDP-N-acetylglucosamine. This Symbiobacterium thermophilum (strain DSM 24528 / JCM 14929 / IAM 14863 / T) protein is UDP-N-acetylglucosamine 1-carboxyvinyltransferase 3.